Reading from the N-terminus, the 366-residue chain is DNA integrity scanning protein DisA (366 aa).

The DAC domain maps to 21–159; the sequence is VHTLKGTLQR…EGKSHMLEQP (139 aa). Residues G88, L106, and 119–123 contribute to the ATP site; that span reads TRHRS.

The protein belongs to the DisA family. As to quaternary structure, homooctamer. Mg(2+) serves as cofactor.

It catalyses the reaction 2 ATP = 3',3'-c-di-AMP + 2 diphosphate. Its function is as follows. Participates in a DNA-damage check-point. DisA forms globular foci that rapidly scan along the chromosomes searching for lesions. In terms of biological role, also has diadenylate cyclase activity, catalyzing the condensation of 2 ATP molecules into cyclic di-AMP (c-di-AMP). c-di-AMP likely acts as a signaling molecule that may couple DNA integrity with a cellular process. This Corynebacterium glutamicum (strain ATCC 13032 / DSM 20300 / JCM 1318 / BCRC 11384 / CCUG 27702 / LMG 3730 / NBRC 12168 / NCIMB 10025 / NRRL B-2784 / 534) protein is DNA integrity scanning protein DisA.